The primary structure comprises 205 residues: Interleukin-6 (205 aa).

The N-terminal stretch at 1–21 is a signal peptide; sequence RFTSAFSLGLLLVTATAFPTP. A disulfide bridge links C64 with C70. S73 bears the Phosphoserine mark. Cysteines 93 and 103 form a disulfide. The N-linked (GlcNAc...) asparagine glycan is linked to N164.

This sequence belongs to the IL-6 superfamily. As to quaternary structure, component of a hexamer of two molecules each of IL6, IL6R and IL6ST; first binds to IL6R to associate with the signaling subunit IL6ST. Interacts with IL6R (via the N-terminal ectodomain); this interaction may be affected by IL6R-binding with SORL1, hence decreasing IL6 cis signaling. Interacts with SORL1 (via the N-terminal ectodomain); this interaction leads to IL6 internalization and lysosomal degradation. May form a trimeric complex with the soluble SORL1 ectodomain and soluble IL6R receptor; this interaction might stabilize circulating IL6, hence promoting IL6 trans signaling.

It is found in the secreted. In terms of biological role, cytokine with a wide variety of biological functions in immunity, tissue regeneration, and metabolism. Binds to IL6R, then the complex associates to the signaling subunit IL6ST/gp130 to trigger the intracellular IL6-signaling pathway. The interaction with the membrane-bound IL6R and IL6ST stimulates 'classic signaling', whereas the binding of IL6 and soluble IL6R to IL6ST stimulates 'trans-signaling'. Alternatively, 'cluster signaling' occurs when membrane-bound IL6:IL6R complexes on transmitter cells activate IL6ST receptors on neighboring receiver cells. Functionally, IL6 is a potent inducer of the acute phase response. Rapid production of IL6 contributes to host defense during infection and tissue injury, but excessive IL6 synthesis is involved in disease pathology. In the innate immune response, is synthesized by myeloid cells, such as macrophages and dendritic cells, upon recognition of pathogens through toll-like receptors (TLRs) at the site of infection or tissue injury. In the adaptive immune response, is required for the differentiation of B cells into immunoglobulin-secreting cells. Plays a major role in the differentiation of CD4(+) T cell subsets. Essential factor for the development of T follicular helper (Tfh) cells that are required for the induction of germinal-center formation. Required to drive naive CD4(+) T cells to the Th17 lineage. Also required for proliferation of myeloma cells and the survival of plasmablast cells. Acts as an essential factor in bone homeostasis and on vessels directly or indirectly by induction of VEGF, resulting in increased angiogenesis activity and vascular permeability. Induces, through 'trans-signaling' and synergistically with IL1B and TNF, the production of VEGF. Involved in metabolic controls, is discharged into the bloodstream after muscle contraction increasing lipolysis and improving insulin resistance. 'Trans-signaling' in central nervous system also regulates energy and glucose homeostasis. Mediates, through GLP-1, crosstalk between insulin-sensitive tissues, intestinal L cells and pancreatic islets to adapt to changes in insulin demand. Also acts as a myokine. Plays a protective role during liver injury, being required for maintenance of tissue regeneration. Also has a pivotal role in iron metabolism by regulating HAMP/hepcidin expression upon inflammation or bacterial infection. Through activation of IL6ST-YAP-NOTCH pathway, induces inflammation-induced epithelial regeneration. This chain is Interleukin-6 (IL6), found in Orcinus orca (Killer whale).